The following is a 129-amino-acid chain: Azurin-2 (129 aa).

A Plastocyanin-like domain is found at 1–129; that stretch reads AQCEATVESN…MMKGTLKLGS (129 aa). A disulfide bridge links cysteine 3 with cysteine 26. Histidine 46, cysteine 112, histidine 117, and methionine 121 together coordinate Cu cation.

Its subcellular location is the periplasm. Functionally, transfers electrons from cytochrome c551 to cytochrome oxidase. The sequence is that of Azurin-2 from Alcaligenes xylosoxydans xylosoxydans (Achromobacter xylosoxidans).